A 556-amino-acid polypeptide reads, in one-letter code: Insulin-like growth factor 2 mRNA-binding protein 2 (556 aa).

RRM domains follow at residues asparagine 3–serine 76 and arginine 82–aspartate 157. Serine 11 is subject to Phosphoserine. Residues proline 156 to glutamine 188 form a disordered region. Serine 162 and serine 164 each carry phosphoserine. Residues glutamine 170 to glycine 180 show a composition bias toward basic and acidic residues. KH domains are found at residues aspartate 193 to isoleucine 258, glutamate 274 to isoleucine 341, glutamine 384 to isoleucine 449, and lysine 466 to isoleucine 532. A Phosphothreonine modification is found at threonine 507.

The protein belongs to the RRM IMP/VICKZ family. In terms of assembly, can form homooligomers and heterooligomers with IGF2BP1 and IGF2BP3 in an RNA-dependent manner. Interacts with HNRPD. Interacts with IGF2BP1. Interacts with ELAVL1, DHX9, HNRNPU, MATR3 and PABPC1.

Its subcellular location is the nucleus. It is found in the cytoplasm. The protein localises to the P-body. It localises to the stress granule. Functionally, RNA-binding factor that recruits target transcripts to cytoplasmic protein-RNA complexes (mRNPs). This transcript 'caging' into mRNPs allows mRNA transport and transient storage. It also modulates the rate and location at which target transcripts encounter the translational apparatus and shields them from endonuclease attacks or microRNA-mediated degradation. Preferentially binds to N6-methyladenosine (m6A)-containing mRNAs and increases their stability. Binds to the 5'-UTR of the insulin-like growth factor 2 (IGF2) mRNAs. Binding is isoform-specific. Binds to beta-actin/ACTB and MYC transcripts. Increases MYC mRNA stability by binding to the coding region instability determinant (CRD) and binding is enhanced by m6A-modification of the CRD. The polypeptide is Insulin-like growth factor 2 mRNA-binding protein 2 (IGF2BP2) (Pongo abelii (Sumatran orangutan)).